Consider the following 953-residue polypeptide: Probable LRR receptor-like serine/threonine-protein kinase At1g53420 (953 aa).

Positions 1–22 (MSLNRFLFTSFSFFLFFIVHFA) are cleaved as a signal peptide. Over 23–566 (SSATLPTQEG…SPRNGMSTGT (544 aa)) the chain is Extracellular. LRR repeat units lie at residues 63–86 (WSTI…LVGL), 88–110 (LLQE…WGVL), 111–132 (PLVN…EFGN), 135–158 (TLTS…GNLP), 159–182 (NIQQ…AKLT), and 183–205 (TLRD…IQKW). 2 N-linked (GlcNAc...) asparagine glycosylation sites follow: Asn100 and Asn132. Residues Asn265, Asn315, Asn335, Asn378, and Asn423 are each glycosylated (N-linked (GlcNAc...) asparagine). The helical transmembrane segment at 567-587 (LHTLVVILSIFIVFLVFGTLW) threads the bilayer. Over 588–953 (KKGYLRSKSQ…SDRSESSADH (366 aa)) the chain is Cytoplasmic. Positions 624 to 901 (FDSANRIGEG…VKMLEGKKMV (278 aa)) constitute a Protein kinase domain. ATP contacts are provided by residues 630-638 (IGEGGFGPV) and Lys652. Tyr697 is subject to Phosphotyrosine. Asp750 functions as the Proton acceptor in the catalytic mechanism. The residue at position 783 (Ser783) is a Phosphoserine. Thr784 and Thr789 each carry phosphothreonine. Tyr797 bears the Phosphotyrosine mark.

The protein belongs to the protein kinase superfamily. Ser/Thr protein kinase family.

It is found in the membrane. The catalysed reaction is L-seryl-[protein] + ATP = O-phospho-L-seryl-[protein] + ADP + H(+). The enzyme catalyses L-threonyl-[protein] + ATP = O-phospho-L-threonyl-[protein] + ADP + H(+). This chain is Probable LRR receptor-like serine/threonine-protein kinase At1g53420, found in Arabidopsis thaliana (Mouse-ear cress).